The chain runs to 156 residues: Inorganic triphosphatase (156 aa).

One can recognise a CYTH domain in the interval 2–148; that stretch reads GKEIEKKFIV…PRYLNSNLVK (147 aa). Residue Tyr29 is the Proton acceptor of the active site.

Homodimer.

The catalysed reaction is triphosphate + H2O = phosphate + diphosphate. The enzyme catalyses ATP + H2O = ADP + phosphate + H(+). Involved in the hydrolysis of the beta-gamma-phosphoanhydride linkage of triphosphate-containing substrates (inorganic or nucleoside-linked). Catalyzes vigorously the hydrolysis of inorganic triphosphate (PPPi), however it can also catalyze the hydrolysis of ATP to ADP and phosphate. It can use ribonucleotides such as GTP, CTP, or UTP and deoxynucleotides such as dATP, dGTP, dCTP, and dTTP. The polypeptide is Inorganic triphosphatase (Acetivibrio thermocellus (strain ATCC 27405 / DSM 1237 / JCM 9322 / NBRC 103400 / NCIMB 10682 / NRRL B-4536 / VPI 7372) (Clostridium thermocellum)).